The following is a 300-amino-acid chain: N-acetylmannosamine kinase (300 aa).

ATP is bound by residues 5-12 (ALDIGGTK) and 132-139 (GVGGGIVL). H156, C166, C168, and C173 together coordinate Zn(2+).

Belongs to the ROK (NagC/XylR) family. NanK subfamily. As to quaternary structure, homodimer.

The enzyme catalyses an N-acyl-D-mannosamine + ATP = an N-acyl-D-mannosamine 6-phosphate + ADP + H(+). Its pathway is amino-sugar metabolism; N-acetylneuraminate degradation; D-fructose 6-phosphate from N-acetylneuraminate: step 2/5. In terms of biological role, catalyzes the phosphorylation of N-acetylmannosamine (ManNAc) to ManNAc-6-P. In Haemophilus influenzae (strain PittGG), this protein is N-acetylmannosamine kinase.